A 651-amino-acid chain; its full sequence is Coiled-coil domain-containing protein 81 (651 aa).

The tract at residues 194 to 314 (LSSRESFGKR…PKTSPAPACQ (121 aa)) is disordered. Ser-206 is modified (phosphoserine). Basic and acidic residues-rich tracts occupy residues 212–222 (RIEHKETENKP) and 232–250 (GENRPRKSKLKDQSDKEEG). The segment covering 265–275 (SISPAKVTSGS) has biased composition (polar residues). A phosphoserine mark is found at Ser-273, Ser-275, Ser-294, and Ser-416. 2 coiled-coil regions span residues 428-465 (SQSLLKQMESKREKEIKQRQNRELMDRLEQVQLTEELA) and 539-566 (KRNTILNQLVDQRRDLQMLQRTKREHLA).

The protein resides in the cytoplasm. It is found in the cytoskeleton. The protein localises to the microtubule organizing center. It localises to the centrosome. This Rattus norvegicus (Rat) protein is Coiled-coil domain-containing protein 81 (Ccdc81).